Reading from the N-terminus, the 87-residue chain is U3-theraphotoxin-Cg1b (87 aa).

Positions 1-23 (MRTLTLIAIVTCAALVIFHAAAA) are cleaved as a signal peptide. Positions 24–48 (EELEAQDVIQPEDIFTGVATLEEDR) are excised as a propeptide. Cystine bridges form between C52-C65, C56-C79, and C73-C84.

This sequence belongs to the neurotoxin 12 (Hwtx-2) family. 03 (juruin) subfamily. Expressed by the venom gland.

It is found in the secreted. Its function is as follows. Probable ion channel inhibitor. In Chilobrachys guangxiensis (Chinese earth tiger tarantula), this protein is U3-theraphotoxin-Cg1b.